Reading from the N-terminus, the 553-residue chain is NAD(P)H-quinone oxidoreductase chain 4 2 (553 aa).

14 helical membrane passes run 6 to 26 (FPWL…IPVI), 34 to 54 (VRWF…YVFL), 87 to 107 (ISAP…LAAW), 115 to 135 (LFYF…VAQD), 136 to 156 (LLLF…LVSI), 169 to 189 (FLLY…AMAL), 210 to 230 (ALEL…LAIF), 244 to 264 (SAPV…YGLI), 276 to 296 (IYFA…GAFA), 312 to 332 (VSHM…GISG), 333 to 353 (AMLQ…LAGV), 376 to 396 (VFAL…MSGF), 418 to 438 (VVTV…LLSM), and 487 to 507 (IFIA…PQLA).

This sequence belongs to the complex I subunit 4 family.

Its subcellular location is the cellular thylakoid membrane. The catalysed reaction is a plastoquinone + NADH + (n+1) H(+)(in) = a plastoquinol + NAD(+) + n H(+)(out). It carries out the reaction a plastoquinone + NADPH + (n+1) H(+)(in) = a plastoquinol + NADP(+) + n H(+)(out). NDH-1 shuttles electrons from NAD(P)H, via FMN and iron-sulfur (Fe-S) centers, to quinones in the respiratory chain. The immediate electron acceptor for the enzyme in this species is believed to be plastoquinone. Couples the redox reaction to proton translocation (for every two electrons transferred, four hydrogen ions are translocated across the cytoplasmic membrane), and thus conserves the redox energy in a proton gradient. The polypeptide is NAD(P)H-quinone oxidoreductase chain 4 2 (Microcystis aeruginosa (strain NIES-843 / IAM M-2473)).